The sequence spans 96 residues: Large ribosomal subunit protein bL27 (96 aa).

Residues 1–9 (MLRLDLQFF) constitute a propeptide that is removed on maturation.

This sequence belongs to the bacterial ribosomal protein bL27 family. The N-terminus is cleaved by ribosomal processing cysteine protease Prp.

The sequence is that of Large ribosomal subunit protein bL27 from Anoxybacillus flavithermus (strain DSM 21510 / WK1).